Consider the following 211-residue polypeptide: Thiamine-phosphate synthase (211 aa).

4-amino-2-methyl-5-(diphosphooxymethyl)pyrimidine is bound by residues 37–41 (QLRIK) and Asn69. Mg(2+)-binding residues include Asp70 and Asp89. Residue Ser108 coordinates 4-amino-2-methyl-5-(diphosphooxymethyl)pyrimidine. Residue 134–136 (TQT) coordinates 2-[(2R,5Z)-2-carboxy-4-methylthiazol-5(2H)-ylidene]ethyl phosphate. Lys137 provides a ligand contact to 4-amino-2-methyl-5-(diphosphooxymethyl)pyrimidine. Residues Gly166 and 186 to 187 (VS) contribute to the 2-[(2R,5Z)-2-carboxy-4-methylthiazol-5(2H)-ylidene]ethyl phosphate site.

It belongs to the thiamine-phosphate synthase family. It depends on Mg(2+) as a cofactor.

It carries out the reaction 2-[(2R,5Z)-2-carboxy-4-methylthiazol-5(2H)-ylidene]ethyl phosphate + 4-amino-2-methyl-5-(diphosphooxymethyl)pyrimidine + 2 H(+) = thiamine phosphate + CO2 + diphosphate. It catalyses the reaction 2-(2-carboxy-4-methylthiazol-5-yl)ethyl phosphate + 4-amino-2-methyl-5-(diphosphooxymethyl)pyrimidine + 2 H(+) = thiamine phosphate + CO2 + diphosphate. The enzyme catalyses 4-methyl-5-(2-phosphooxyethyl)-thiazole + 4-amino-2-methyl-5-(diphosphooxymethyl)pyrimidine + H(+) = thiamine phosphate + diphosphate. It participates in cofactor biosynthesis; thiamine diphosphate biosynthesis; thiamine phosphate from 4-amino-2-methyl-5-diphosphomethylpyrimidine and 4-methyl-5-(2-phosphoethyl)-thiazole: step 1/1. In terms of biological role, condenses 4-methyl-5-(beta-hydroxyethyl)thiazole monophosphate (THZ-P) and 2-methyl-4-amino-5-hydroxymethyl pyrimidine pyrophosphate (HMP-PP) to form thiamine monophosphate (TMP). This Escherichia coli (strain SE11) protein is Thiamine-phosphate synthase.